Here is a 418-residue protein sequence, read N- to C-terminus: Glutamyl-tRNA reductase (418 aa).

Residues 49–52 (TCNR), Ser107, 112–114 (EPQ), and Gln118 contribute to the substrate site. Cys50 acts as the Nucleophile in catalysis. 187–192 (GAGETI) is a binding site for NADP(+).

It belongs to the glutamyl-tRNA reductase family. Homodimer.

It catalyses the reaction (S)-4-amino-5-oxopentanoate + tRNA(Glu) + NADP(+) = L-glutamyl-tRNA(Glu) + NADPH + H(+). It participates in porphyrin-containing compound metabolism; protoporphyrin-IX biosynthesis; 5-aminolevulinate from L-glutamyl-tRNA(Glu): step 1/2. Functionally, catalyzes the NADPH-dependent reduction of glutamyl-tRNA(Glu) to glutamate 1-semialdehyde (GSA). The chain is Glutamyl-tRNA reductase from Vibrio campbellii (strain ATCC BAA-1116).